The sequence spans 321 residues: GDP-L-fucose synthase (321 aa).

14-20 (GGSGLVG) contributes to the NADP(+) binding site. Y143 functions as the Proton donor/acceptor in the catalytic mechanism. NADP(+) contacts are provided by residues K147, 170-173 (PTNV), and H186. The substrate site is built by K194, W208, R215, and D277.

It belongs to the NAD(P)-dependent epimerase/dehydratase family. Fucose synthase subfamily. In terms of assembly, homodimer.

It carries out the reaction GDP-beta-L-fucose + NADP(+) = GDP-4-dehydro-alpha-D-rhamnose + NADPH + H(+). The protein operates within nucleotide-sugar biosynthesis; GDP-L-fucose biosynthesis via de novo pathway; GDP-L-fucose from GDP-alpha-D-mannose: step 2/2. Functionally, catalyzes the two-step NADP-dependent conversion of GDP-4-dehydro-6-deoxy-D-mannose to GDP-fucose, involving an epimerase and a reductase reaction. The chain is GDP-L-fucose synthase (GFUS) from Pongo abelii (Sumatran orangutan).